Reading from the N-terminus, the 493-residue chain is Probable protein phosphatase 2C 40 (493 aa).

One can recognise a PPM-type phosphatase domain in the interval 145-480 (LLSAMEVQVA…DDVTIMVITL (336 aa)). Mn(2+) is bound by residues Asp-180, Gly-181, Asp-408, and Asp-471.

It belongs to the PP2C family. Mg(2+) is required as a cofactor. Requires Mn(2+) as cofactor.

The enzyme catalyses O-phospho-L-seryl-[protein] + H2O = L-seryl-[protein] + phosphate. It carries out the reaction O-phospho-L-threonyl-[protein] + H2O = L-threonyl-[protein] + phosphate. The chain is Probable protein phosphatase 2C 40 from Arabidopsis thaliana (Mouse-ear cress).